Consider the following 328-residue polypeptide: Neuronal membrane glycoprotein M6-b (328 aa).

A disordered region spans residues 1–22 (MKPAMETAAEENTEQSQERKVN). Residues 71–91 (GGVPYASLVATILCFSGVALF) traverse the membrane as a helical segment. N-linked (GlcNAc...) asparagine glycosylation occurs at Asn-113. Helical transmembrane passes span 130–150 (VIYG…AEGF) and 176–196 (FVFL…FSAV). Residue Asn-217 is glycosylated (N-linked (GlcNAc...) asparagine). A helical transmembrane segment spans residues 265–285 (FIVACAGAGATVIALIHFLMI). 3 positions are modified to phosphoserine: Ser-318, Ser-320, and Ser-326.

It belongs to the myelin proteolipid protein family. Interacts with SERT. Widely expressed. In the brain, expressed in neurons and oligodendrocytes.

The protein resides in the membrane. It localises to the cell membrane. May be involved in neural development. Involved in regulation of osteoblast function and bone formation. Involved in matrix vesicle release by osteoblasts; this function seems to involve maintenance of the actin cytoskeleton. May be involved in cellular trafficking of SERT and thereby in regulation of serotonin uptake. This chain is Neuronal membrane glycoprotein M6-b (Gpm6b), found in Mus musculus (Mouse).